A 128-amino-acid polypeptide reads, in one-letter code: L-ectoine synthase (128 aa).

Belongs to the ectoine synthase family.

The catalysed reaction is (2S)-4-acetamido-2-aminobutanoate = L-ectoine + H2O. It participates in amine and polyamine biosynthesis; ectoine biosynthesis; L-ectoine from L-aspartate 4-semialdehyde: step 3/3. In terms of biological role, catalyzes the circularization of gamma-N-acetyl-alpha,gamma-diaminobutyric acid (ADABA) to ectoine (1,4,5,6-tetrahydro-2-methyl-4-pyrimidine carboxylic acid), which is an excellent osmoprotectant. The sequence is that of L-ectoine synthase from Vibrio atlanticus (strain LGP32) (Vibrio splendidus (strain Mel32)).